A 700-amino-acid polypeptide reads, in one-letter code: Peroxisomal acyl-coenzyme A oxidase 1 (700 aa).

FAD-binding positions include Thr147, Gly186, and 412 to 417; that span reads CGGHGY. The active-site Proton acceptor is Glu437. Positions 698–700 match the Microbody targeting signal motif; the sequence is SKL.

Belongs to the acyl-CoA oxidase family. FAD serves as cofactor.

It is found in the peroxisome. It carries out the reaction a 2,3-saturated acyl-CoA + O2 = a (2E)-enoyl-CoA + H2O2. Catalyzes the desaturation of acyl-CoAs to 2-trans-enoyl-CoAs. First enzyme of the fatty acid beta-oxidation pathway. In Dictyostelium discoideum (Social amoeba), this protein is Peroxisomal acyl-coenzyme A oxidase 1 (acox1).